The chain runs to 426 residues: Histidine--tRNA ligase (426 aa).

It belongs to the class-II aminoacyl-tRNA synthetase family. In terms of assembly, homodimer.

It localises to the cytoplasm. The enzyme catalyses tRNA(His) + L-histidine + ATP = L-histidyl-tRNA(His) + AMP + diphosphate + H(+). The sequence is that of Histidine--tRNA ligase from Streptococcus pyogenes serotype M6 (strain ATCC BAA-946 / MGAS10394).